The following is a 483-amino-acid chain: SWI/SNF-related matrix-associated actin-dependent regulator of chromatin subfamily D member 3 (483 aa).

A2 is subject to N-acetylalanine. Residues 27–102 (RPGMPSGARM…ARSRSAKRRK (76 aa)) form a disordered region. The span at 78–88 (QSQAQGQGQPV) shows a compositional bias: low complexity. Phosphoserine is present on S178. The SWIB/MDM2 domain occupies 258 to 335 (YQPPQFKLDP…PQRLTALLLP (78 aa)).

It belongs to the SMARCD family. As to quaternary structure, component of the multiprotein chromatin-remodeling complexes SWI/SNF: SWI/SNF-A (BAF), SWI/SNF-B (PBAF) and related complexes. The canonical complex contains a catalytic subunit (either SMARCA4/BRG1/BAF190A or SMARCA2/BRM/BAF190B) and at least SMARCE1, ACTL6A/BAF53, SMARCC1/BAF155, SMARCC2/BAF170, and SMARCB1/SNF5/BAF47. Other subunits specific to each of the complexes may also be present permitting several possible combinations developmentally and tissue specific. Component of the BAF complex, which includes at least actin (ACTB), ARID1A/BAF250A, ARID1B/BAF250B, SMARCA2/BRM, SMARCA4/BRG1/BAF190A, ACTL6A/BAF53, ACTL6B/BAF53B, SMARCE1/BAF57, SMARCC1/BAF155, SMARCC2/BAF170, SMARCB1/SNF5/INI1, and one or more SMARCD1/BAF60A, SMARCD2/BAF60B, or SMARCD3/BAF60C. In muscle cells, the BAF complex also contains DPF3. Component of neural progenitors-specific chromatin remodeling complex (npBAF complex) composed of at least, ARID1A/BAF250A or ARID1B/BAF250B, SMARCD1/BAF60A, SMARCD3/BAF60C, SMARCA2/BRM/BAF190B, SMARCA4/BRG1/BAF190A, SMARCB1/BAF47, SMARCC1/BAF155, SMARCE1/BAF57, SMARCC2/BAF170, PHF10/BAF45A, ACTL6A/BAF53A and actin. Component of neuron-specific chromatin remodeling complex (nBAF complex) composed of at least, ARID1A/BAF250A or ARID1B/BAF250B, SMARCD1/BAF60A, SMARCD3/BAF60C, SMARCA2/BRM/BAF190B, SMARCA4/BRG1/BAF190A, SMARCB1/BAF47, SMARCC1/BAF155, SMARCE1/BAF57, SMARCC2/BAF170, DPF1/BAF45B, DPF3/BAF45C, ACTL6B/BAF53B and actin. May be a component of the SWI/SNF-B (PBAF) chromatin remodeling complex, at least composed of SMARCA4/BRG1, SMARCB1/BAF47/SNF5, ACTL6A/BAF53A or ACTL6B/BAF53B, SMARCE1/BAF57, SMARCD1/BAF60A, SMARCD2/BAF60B, perhaps SMARCD3/BAF60C, SMARCC1/BAF155, SMARCC2/BAF170, PBRM1/BAF180, ARID2/BAF200 and actin. Component of SWI/SNF (GBAF) subcomplex, which includes at least BICRA or BICRAL (mutually exclusive), BRD9, SS18, SMARCA2/BRM, SMARCA4/BRG1/BAF190A, ACTL6A/BAF53, SMARCC1/BAF155, and SMARCD1/BAF60A. Interacts with SMARCA4/BRG1/BAF190A. The precise distribution of the related SMARCD1, SMARCD2 and SMARCD3 proteins among these and other SWI/SNF nucleosome-remodeling complexes is not fully known. May allow recruitment of SWI/SNF containing complexes specifically to promoters where these factors are located. Also interacts with several nuclear receptors including PPARG/NR1C3, RXRA/NR1F1, ESR1, NR5A1, NR5A2/LRH1 and other transcriptional activators including the HLH protein SREBF1/SREBP1 and the homeobox protein PBX1. Interacts with PRDM1/BLIMP1. Ubiquitously expressed.

The protein resides in the nucleus. Involved in transcriptional activation and repression of select genes by chromatin remodeling (alteration of DNA-nucleosome topology). Component of SWI/SNF chromatin remodeling complexes that carry out key enzymatic activities, changing chromatin structure by altering DNA-histone contacts within a nucleosome in an ATP-dependent manner. Stimulates nuclear receptor mediated transcription. Belongs to the neural progenitors-specific chromatin remodeling complex (npBAF complex) and the neuron-specific chromatin remodeling complex (nBAF complex). During neural development a switch from a stem/progenitor to a postmitotic chromatin remodeling mechanism occurs as neurons exit the cell cycle and become committed to their adult state. The transition from proliferating neural stem/progenitor cells to postmitotic neurons requires a switch in subunit composition of the npBAF and nBAF complexes. As neural progenitors exit mitosis and differentiate into neurons, npBAF complexes which contain ACTL6A/BAF53A and PHF10/BAF45A, are exchanged for homologous alternative ACTL6B/BAF53B and DPF1/BAF45B or DPF3/BAF45C subunits in neuron-specific complexes (nBAF). The npBAF complex is essential for the self-renewal/proliferative capacity of the multipotent neural stem cells. The nBAF complex along with CREST plays a role regulating the activity of genes essential for dendrite growth. In Mus musculus (Mouse), this protein is SWI/SNF-related matrix-associated actin-dependent regulator of chromatin subfamily D member 3 (Smarcd3).